We begin with the raw amino-acid sequence, 280 residues long: Phosphatidylinositol N-acetylglucosaminyltransferase GPI2 subunit (280 aa).

Topologically, residues 1 to 53 are cytoplasmic; that stretch reads MTRSPWKRLLWLKQEYPDNYTDPSFIELRARQKAESNQKSDRKLSEAARAQIR. Residues 54–74 traverse the membrane as a helical segment; that stretch reads LDFISFYQTILNTSFIYITFT. A topological domain (extracellular) is located at residue Tyr-75. The helical transmembrane segment at 76–96 threads the bilayer; the sequence is IYYYGFDPIPPTIFLSFITLI. The Cytoplasmic portion of the chain corresponds to 97 to 108; sequence ISRTKVDPLLSS. Residues 109–129 traverse the membrane as a helical segment; that stretch reads FMDVKSSLIITFAMLTLSPVL. At 130-135 the chain is on the extracellular side; sequence KSLSKT. A helical membrane pass occupies residues 136-156; it reads TASDSIWTLSFWLTLWYIFVI. Over 157-189 the chain is Cytoplasmic; that stretch reads SSTKSKDKPSNLSTNILVALVAVLSSRLSTTID. A helical transmembrane segment spans residues 190–210; it reads VFCFLLICIQLNIILPTYLSV. At 211–220 the chain is on the extracellular side; the sequence is TNKVVPIISN. The helical transmembrane segment at 221 to 241 threads the bilayer; it reads IIVYSFLNVALGWIYMLLIFF. The Cytoplasmic segment spans residues 242 to 280; the sequence is ASVFYITVLPKWFIYWKINYHKRDNDLLSTWDARTPILD.

This sequence belongs to the PIGC family. Component of the phosphatidylinositol N-acetylglucosaminyltransferase (GPI-GlcNAc transferase) complex composed of at least GPI1, GPI2, GPI3, GPI15, GPI19 and ERI1. Interacts with ERI1.

The protein localises to the membrane. It carries out the reaction a 1,2-diacyl-sn-glycero-3-phospho-(1D-myo-inositol) + UDP-N-acetyl-alpha-D-glucosamine = a 6-(N-acetyl-alpha-D-glucosaminyl)-1-(1,2-diacyl-sn-glycero-3-phospho)-1D-myo-inositol + UDP + H(+). It participates in glycolipid biosynthesis; glycosylphosphatidylinositol-anchor biosynthesis. In terms of biological role, part of the complex catalyzing the transfer of N-acetylglucosamine from UDP-N-acetylglucosamine to phosphatidylinositol, the first step of GPI biosynthesis. The protein is Phosphatidylinositol N-acetylglucosaminyltransferase GPI2 subunit (GPI2) of Saccharomyces cerevisiae (strain ATCC 204508 / S288c) (Baker's yeast).